The primary structure comprises 363 residues: Peptide-N(4)-(N-acetyl-beta-glucosaminyl)asparagine amidase (363 aa).

The Zn(2+) site is built by cysteine 129, cysteine 132, cysteine 165, and cysteine 168. Residue cysteine 191 is the Nucleophile of the active site. Catalysis depends on residues histidine 218 and aspartate 235. A substrate-binding site is contributed by glutamate 238. Residues 325 to 363 form a disordered region; that stretch reads RGKTQETKSESVSAASKSSNRGRESGSADWKAQRGEDGK. The segment covering 334–343 has biased composition (low complexity); it reads ESVSAASKSS. The span at 345-363 shows a compositional bias: basic and acidic residues; that stretch reads RGRESGSADWKAQRGEDGK.

This sequence belongs to the transglutaminase-like superfamily. PNGase family. In terms of assembly, interacts with RAD23 subunit of 26S proteasome. Requires Zn(2+) as cofactor.

It localises to the cytoplasm. Its subcellular location is the nucleus. It catalyses the reaction Hydrolysis of an N(4)-(acetyl-beta-D-glucosaminyl)asparagine residue in which the glucosamine residue may be further glycosylated, to yield a (substituted) N-acetyl-beta-D-glucosaminylamine and a peptide containing an aspartate residue.. Its activity is regulated as follows. Inhibited by Z-VAD-fmk, a well-known caspase inhibitor. Also inhibited by Man9GlcNAc2-iodoacetoamide. Both molecules inhibit enzyme activity through covalent binding of the carbohydrate to the single Cys-191 residue. In terms of biological role, specifically deglycosylates the denatured form of N-linked glycoproteins in the cytoplasm and assists their proteasome-mediated degradation. Cleaves the beta-aspartyl-glucosamine (GlcNAc) of the glycan and the amide side chain of Asn, converting Asn to Asp. Prefers proteins containing high-mannose over those bearing complex type oligosaccharides. Can recognize misfolded proteins in the endoplasmic reticulum that are exported to the cytosol to be destroyed and deglycosylate them, while it has no activity toward native proteins. Deglycosylation is a prerequisite for subsequent proteasome-mediated degradation of some, but not all, misfolded glycoproteins. Involved in the formation of free oligosaccharide in cytosol. This is Peptide-N(4)-(N-acetyl-beta-glucosaminyl)asparagine amidase (PNG1) from Saccharomyces cerevisiae (strain ATCC 204508 / S288c) (Baker's yeast).